A 98-amino-acid chain; its full sequence is Integration host factor subunit alpha (98 aa).

A disordered region spans residues 49-70; sequence FGNFDLRDKNQRPGRNPKTGED.

This sequence belongs to the bacterial histone-like protein family. Heterodimer of an alpha and a beta chain.

Its function is as follows. This protein is one of the two subunits of integration host factor, a specific DNA-binding protein that functions in genetic recombination as well as in transcriptional and translational control. This Serratia proteamaculans (strain 568) protein is Integration host factor subunit alpha.